A 406-amino-acid chain; its full sequence is Cysteine desulfurase (406 aa).

Lys226 is subject to N6-(pyridoxal phosphate)lysine. Cys364 (cysteine persulfide intermediate) is an active-site residue.

Belongs to the class-V pyridoxal-phosphate-dependent aminotransferase family. Csd subfamily. As to quaternary structure, homodimer. Interacts with SufE and the SufBCD complex composed of SufB, SufC and SufD. The interaction with SufE is required to mediate the direct transfer of the sulfur atom from the S-sulfanylcysteine. It depends on pyridoxal 5'-phosphate as a cofactor.

The protein resides in the cytoplasm. The enzyme catalyses (sulfur carrier)-H + L-cysteine = (sulfur carrier)-SH + L-alanine. It carries out the reaction L-selenocysteine + AH2 = hydrogenselenide + L-alanine + A + H(+). Its pathway is cofactor biosynthesis; iron-sulfur cluster biosynthesis. Functionally, cysteine desulfurases mobilize the sulfur from L-cysteine to yield L-alanine, an essential step in sulfur metabolism for biosynthesis of a variety of sulfur-containing biomolecules. Component of the suf operon, which is activated and required under specific conditions such as oxidative stress and iron limitation. Acts as a potent selenocysteine lyase in vitro, that mobilizes selenium from L-selenocysteine. Selenocysteine lyase activity is however unsure in vivo. This chain is Cysteine desulfurase, found in Yersinia pseudotuberculosis serotype O:1b (strain IP 31758).